Consider the following 246-residue polypeptide: Ribonuclease PH (246 aa).

Phosphate contacts are provided by residues R91 and 129–131 (GTR).

This sequence belongs to the RNase PH family. Homohexameric ring arranged as a trimer of dimers.

The enzyme catalyses tRNA(n+1) + phosphate = tRNA(n) + a ribonucleoside 5'-diphosphate. In terms of biological role, phosphorolytic 3'-5' exoribonuclease that plays an important role in tRNA 3'-end maturation. Removes nucleotide residues following the 3'-CCA terminus of tRNAs; can also add nucleotides to the ends of RNA molecules by using nucleoside diphosphates as substrates, but this may not be physiologically important. Probably plays a role in initiation of 16S rRNA degradation (leading to ribosome degradation) during starvation. This chain is Ribonuclease PH, found in Burkholderia cenocepacia (strain ATCC BAA-245 / DSM 16553 / LMG 16656 / NCTC 13227 / J2315 / CF5610) (Burkholderia cepacia (strain J2315)).